Consider the following 607-residue polypeptide: DNA polymerase (607 aa).

One can recognise a 3'-5' exonuclease domain in the interval 1-213; that stretch reads MIELRHEVQG…CSALAPLVPD (213 aa). Positions 214–607 are polymerase; it reads VSRPLVPYEH…SWGSLYGADY (394 aa).

Belongs to the DNA polymerase type-A family.

It catalyses the reaction DNA(n) + a 2'-deoxyribonucleoside 5'-triphosphate = DNA(n+1) + diphosphate. Functionally, replicates viral genomic DNA. This polymerase possesses two enzymatic activities: DNA synthesis (polymerase) and an exonucleolytic activity that degrades single-stranded DNA in the 3'-5' direction. This is DNA polymerase (44) from Mycobacterium phage D29 (Mycobacteriophage D29).